The sequence spans 32 residues: YYVWIGLRWVNIDCVEGNWSDYSSVSYENLVR.

In terms of assembly, dimer; disulfide-linked. Expressed by the venom gland.

The protein resides in the secreted. Interferes with one step of hemostasis (modulation of platelet aggregation, or coagulation cascade, for example). The sequence is that of Snaclec from Bothrops diporus (Chaco lancehead).